The sequence spans 362 residues: Phosphoserine aminotransferase (362 aa).

L-glutamate contacts are provided by serine 9 and arginine 42. Pyridoxal 5'-phosphate is bound by residues 76–77 (GR), tryptophan 102, threonine 153, aspartate 174, and glutamine 197. N6-(pyridoxal phosphate)lysine is present on lysine 198. Residue 239-240 (NT) coordinates pyridoxal 5'-phosphate.

It belongs to the class-V pyridoxal-phosphate-dependent aminotransferase family. SerC subfamily. Homodimer. It depends on pyridoxal 5'-phosphate as a cofactor.

It is found in the cytoplasm. The catalysed reaction is O-phospho-L-serine + 2-oxoglutarate = 3-phosphooxypyruvate + L-glutamate. It carries out the reaction 4-(phosphooxy)-L-threonine + 2-oxoglutarate = (R)-3-hydroxy-2-oxo-4-phosphooxybutanoate + L-glutamate. The protein operates within amino-acid biosynthesis; L-serine biosynthesis; L-serine from 3-phospho-D-glycerate: step 2/3. Its pathway is cofactor biosynthesis; pyridoxine 5'-phosphate biosynthesis; pyridoxine 5'-phosphate from D-erythrose 4-phosphate: step 3/5. Its function is as follows. Catalyzes the reversible conversion of 3-phosphohydroxypyruvate to phosphoserine and of 3-hydroxy-2-oxo-4-phosphonooxybutanoate to phosphohydroxythreonine. The protein is Phosphoserine aminotransferase of Salmonella arizonae (strain ATCC BAA-731 / CDC346-86 / RSK2980).